The following is a 139-amino-acid chain: Small ribosomal subunit protein bS6 (139 aa).

Positions 118 to 139 are disordered; the sequence is SFKGGSKIETPTGSESTDIQEK. Positions 126–139 are enriched in polar residues; that stretch reads ETPTGSESTDIQEK.

This sequence belongs to the bacterial ribosomal protein bS6 family.

Binds together with bS18 to 16S ribosomal RNA. The chain is Small ribosomal subunit protein bS6 from Borrelia garinii subsp. bavariensis (strain ATCC BAA-2496 / DSM 23469 / PBi) (Borreliella bavariensis).